The sequence spans 119 residues: Ribonuclease P protein component (119 aa).

Belongs to the RnpA family. Consists of a catalytic RNA component (M1 or rnpB) and a protein subunit.

It catalyses the reaction Endonucleolytic cleavage of RNA, removing 5'-extranucleotides from tRNA precursor.. RNaseP catalyzes the removal of the 5'-leader sequence from pre-tRNA to produce the mature 5'-terminus. It can also cleave other RNA substrates such as 4.5S RNA. The protein component plays an auxiliary but essential role in vivo by binding to the 5'-leader sequence and broadening the substrate specificity of the ribozyme. In Mycolicibacterium paratuberculosis (strain ATCC BAA-968 / K-10) (Mycobacterium paratuberculosis), this protein is Ribonuclease P protein component.